The primary structure comprises 355 residues: Elongation factor Ts (355 aa).

Residues 82–85 (TDFV) form an involved in Mg(2+) ion dislocation from EF-Tu region.

The protein belongs to the EF-Ts family.

It localises to the cytoplasm. Associates with the EF-Tu.GDP complex and induces the exchange of GDP to GTP. It remains bound to the aminoacyl-tRNA.EF-Tu.GTP complex up to the GTP hydrolysis stage on the ribosome. This chain is Elongation factor Ts, found in Wolinella succinogenes (strain ATCC 29543 / DSM 1740 / CCUG 13145 / JCM 31913 / LMG 7466 / NCTC 11488 / FDC 602W) (Vibrio succinogenes).